A 121-amino-acid chain; its full sequence is Glycine cleavage system H protein (121 aa).

Residues 16–98 enclose the Lipoyl-binding domain; that stretch reads VATIGITAHA…EAGGWFAKVR (83 aa). Position 57 is an N6-lipoyllysine (Lys57).

The protein belongs to the GcvH family. In terms of assembly, the glycine cleavage system is composed of four proteins: P, T, L and H. It depends on (R)-lipoate as a cofactor.

Functionally, the glycine cleavage system catalyzes the degradation of glycine. The H protein shuttles the methylamine group of glycine from the P protein to the T protein. This chain is Glycine cleavage system H protein, found in Phenylobacterium zucineum (strain HLK1).